Here is a 121-residue protein sequence, read N- to C-terminus: MARIAGINIPPQQHAEIGLTAIFGIGRTRARKICEAAGVPVTKKVKDLTDAELERIREHIGVFAVEGDLRREVQLSIKRLIDLGTYRGMRHKRGLPVRGQRTRTNARTRKGPRRAAASLKK.

A disordered region spans residues 92-121 (KRGLPVRGQRTRTNARTRKGPRRAAASLKK).

Belongs to the universal ribosomal protein uS13 family. In terms of assembly, part of the 30S ribosomal subunit. Forms a loose heterodimer with protein S19. Forms two bridges to the 50S subunit in the 70S ribosome.

Located at the top of the head of the 30S subunit, it contacts several helices of the 16S rRNA. In the 70S ribosome it contacts the 23S rRNA (bridge B1a) and protein L5 of the 50S subunit (bridge B1b), connecting the 2 subunits; these bridges are implicated in subunit movement. Contacts the tRNAs in the A and P-sites. The polypeptide is Small ribosomal subunit protein uS13 (Bordetella bronchiseptica (strain ATCC BAA-588 / NCTC 13252 / RB50) (Alcaligenes bronchisepticus)).